We begin with the raw amino-acid sequence, 224 residues long: A-factor barrier protein 1 (224 aa).

Positions Met-1 to Ala-25 are cleaved as a signal peptide. 3 N-linked (GlcNAc...) asparagine glycosylation sites follow: Asn-148, Asn-181, and Asn-191. Residue Asn-203 is the site of GPI-anchor amidated asparagine attachment. Residues Gly-204 to Leu-224 constitute a propeptide, removed in mature form.

It belongs to the SRP1/TIP1 family. Post-translationally, the GPI-anchor is attached to the protein in the endoplasmic reticulum and serves to target the protein to the cell surface. There, the glucosamine-inositol phospholipid moiety is cleaved off and the GPI-modified mannoprotein is covalently attached via its lipidless GPI glycan remnant to the 1,6-beta-glucan of the outer cell wall layer.

It is found in the secreted. It localises to the cell wall. The protein resides in the membrane. In terms of biological role, MATalpha-specific protein that interferes with a-factor, the pheromone secreted by MATa cells. Contributes to mating efficiency. Acts to bind and sequester a-factor rather than to degrade it, and promotes the efficient mating of MATalpha cells by keeping the a-factor concentration at the plasma membrane within the narrow range needed for accurate pheromone gradient detection. This is A-factor barrier protein 1 from Saccharomyces cerevisiae (strain ATCC 204508 / S288c) (Baker's yeast).